The sequence spans 441 residues: Peroxisomal multifunctional enzyme A (441 aa).

The tract at residues 1–302 (MALNFKDKVV…VNSKPADGES (302 aa)) is 3-hydroxyacyl-CoA dehydrogenase. Residues 11–35 (IVTGAGGGIGKVYALEFAKRGAKVV), isoleucine 19, aspartate 38, 73–74 (SV), and asparagine 97 contribute to the NAD(+) site. Serine 149 contacts substrate. Tyrosine 162 serves as the catalytic Proton acceptor. Residues 162-166 (YGSMK) and 194-197 (AASR) contribute to the NAD(+) site. Positions 331–440 (ASKIFTTIQG…KLGALMQGSK (110 aa)) constitute an SCP2 domain. Glutamine 412 provides a ligand contact to substrate.

The protein belongs to the short-chain dehydrogenases/reductases (SDR) family.

It is found in the peroxisome. The enzyme catalyses a (3S)-3-hydroxyacyl-CoA + NAD(+) = a 3-oxoacyl-CoA + NADH + H(+). It participates in lipid metabolism; fatty acid beta-oxidation. In terms of biological role, enzyme acting on the peroxisomal beta-oxidation pathway for fatty acids. Protects the cells from the increase of the harmful xenobiotic fatty acids incorporated from their diets and optimizes cellular lipid composition for proper development. This chain is Peroxisomal multifunctional enzyme A (mfeA), found in Dictyostelium discoideum (Social amoeba).